The primary structure comprises 109 residues: uncharacterized protein (109 aa).

This is an uncharacterized protein from Mycobacterium tuberculosis (strain CDC 1551 / Oshkosh).